The primary structure comprises 301 residues: Protoheme IX farnesyltransferase (301 aa).

Transmembrane regions (helical) follow at residues 29 to 49 (VVAL…PGAV), 51 to 71 (LQPL…AAAF), 101 to 121 (AFSF…WWVN), 123 to 143 (LTAW…TAYL), 150 to 170 (NIVI…TAVT), 177 to 197 (ALLL…ALAI), 223 to 243 (CILL…LVGM), 244 to 264 (SGPV…YKAW), and 281 to 301 (FSIY…YLWG).

Belongs to the UbiA prenyltransferase family. Protoheme IX farnesyltransferase subfamily.

The protein localises to the cell inner membrane. It catalyses the reaction heme b + (2E,6E)-farnesyl diphosphate + H2O = Fe(II)-heme o + diphosphate. The protein operates within porphyrin-containing compound metabolism; heme O biosynthesis; heme O from protoheme: step 1/1. Its function is as follows. Converts heme B (protoheme IX) to heme O by substitution of the vinyl group on carbon 2 of heme B porphyrin ring with a hydroxyethyl farnesyl side group. This is Protoheme IX farnesyltransferase from Shewanella denitrificans (strain OS217 / ATCC BAA-1090 / DSM 15013).